The sequence spans 406 residues: 5-hydroxytryptamine receptor 4 (406 aa).

At 1-19 (MDRLDANVSSNEGFGSVEK) the chain is on the extracellular side. An N-linked (GlcNAc...) asparagine glycan is attached at N7. A helical transmembrane segment spans residues 20–44 (VVLLTFFAMVILMAILGNLLVMVAV). Residues 45 to 54 (CRDRQLRKIK) lie on the Cytoplasmic side of the membrane. Residues 55 to 78 (TNYFIVSLAFADLLVSVLVNAFGA) form a helical membrane-spanning segment. Residues 79-92 (IELVQDIWFYGEMF) lie on the Extracellular side of the membrane. The helical transmembrane segment at 93–117 (CLVRTSLDVLLTTASIFHLCCISLD) threads the bilayer. A disulfide bridge links C93 with C184. Residue D100 coordinates serotonin. Over 118–133 (RYYAICCQPLVYRNKM) the chain is Cytoplasmic. A helical transmembrane segment spans residues 134 to 157 (TPLRIALMLGGCWVIPMFISFLPI). The Extracellular segment spans residues 158-188 (MQGWNNIGIVDVIEKRKFNHNSNSTFCVFMV). Residues 189-212 (NKPYAITCSVVAFYIPFLLMVLAY) form a helical membrane-spanning segment. Topologically, residues 213-257 (YRIYVTAKEHAQQIQMLQRAGATSESRPQTADQHSTHRMRTETKA) are cytoplasmic. The chain crosses the membrane as a helical span at residues 258–283 (AKTLCVIMGCFCFCWAPFFVTNIVDP). A serotonin-binding site is contributed by N279. The Extracellular portion of the chain corresponds to 284-290 (FIDYTVP). A helical transmembrane segment spans residues 291-314 (EKVWTAFLWLGYINSGLNPFLYAF). Topologically, residues 315 to 406 (LNKSFRRAFL…DSCSLKRSQS (92 aa)) are cytoplasmic.

This sequence belongs to the G-protein coupled receptor 1 family. In terms of assembly, interacts (via C-terminus 330-346 AA) with GRK5; this interaction is promoted by 5-HT (serotonin). As to expression, in brain, isoform 5-HT4S is restricted to the striatum. In peripheral tissues, differential expression is also observed in the atrium of the heart where only isoform 5-HT4S is detectable. In brain, isoform 5-HT4L is expressed throughout the brain, except in the cerebellum.

It is found in the cell membrane. The protein resides in the endosome membrane. In terms of biological role, G-protein coupled receptor for 5-hydroxytryptamine (serotonin), a biogenic hormone that functions as a neurotransmitter, a hormone and a mitogen. Ligand binding causes a conformation change that triggers signaling via guanine nucleotide-binding proteins (G proteins) and modulates the activity of downstream effectors. HTR4 is coupled to G(s) G alpha proteins and mediates activation of adenylate cyclase activity. The chain is 5-hydroxytryptamine receptor 4 (Htr4) from Rattus norvegicus (Rat).